We begin with the raw amino-acid sequence, 394 residues long: Flap endonuclease 1 (394 aa).

The interval 1–104 (MGIKQLFSVI…GELAKRFQRK (104 aa)) is N-domain. Aspartate 34 is a Mg(2+) binding site. DNA contacts are provided by arginine 47 and arginine 70. Positions 86, 158, 160, 179, and 181 each coordinate Mg(2+). An I-domain region spans residues 122–253 (DVEKFSRRTV…STALKLIREH (132 aa)). DNA is bound at residue glutamate 158. DNA contacts are provided by glycine 231 and aspartate 233. Aspartate 233 serves as a coordination point for Mg(2+). Positions 341-349 (QQARIEGFF) are interaction with PCNA. The span at 356–383 (EEEKKAHKRKLEEQAEQKRKKVKEEKKE) shows a compositional bias: basic and acidic residues. The tract at residues 356-394 (EEEKKAHKRKLEEQAEQKRKKVKEEKKEKAKLKAKPRGA) is disordered. Basic residues predominate over residues 384 to 394 (KAKLKAKPRGA).

Belongs to the XPG/RAD2 endonuclease family. FEN1 subfamily. In terms of assembly, interacts with PCNA. Three molecules of dnr-8/fen1 bind to one PCNA trimer with each molecule binding to one PCNA monomer. PCNA stimulates the nuclease activity without altering cleavage specificity. Mg(2+) serves as cofactor. Post-translationally, phosphorylated. Phosphorylation upon DNA damage induces relocalization to the nuclear plasma.

It localises to the nucleus. Its subcellular location is the nucleolus. It is found in the nucleoplasm. The protein localises to the mitochondrion. In terms of biological role, structure-specific nuclease with 5'-flap endonuclease and 5'-3' exonuclease activities involved in DNA replication and repair. During DNA replication, cleaves the 5'-overhanging flap structure that is generated by displacement synthesis when DNA polymerase encounters the 5'-end of a downstream Okazaki fragment. It enters the flap from the 5'-end and then tracks to cleave the flap base, leaving a nick for ligation. Also involved in the long patch base excision repair (LP-BER) pathway, by cleaving within the apurinic/apyrimidinic (AP) site-terminated flap. Acts as a genome stabilization factor that prevents flaps from equilibrating into structures that lead to duplications and deletions. Also possesses 5'-3' exonuclease activity on nicked or gapped double-stranded DNA, and exhibits RNase H activity. Also involved in replication and repair of rDNA and in repairing mitochondrial DNA. The sequence is that of Flap endonuclease 1 (dnr-8) from Neurospora crassa (strain ATCC 24698 / 74-OR23-1A / CBS 708.71 / DSM 1257 / FGSC 987).